Here is a 509-residue protein sequence, read N- to C-terminus: MDIRAAEISAILKDQIKNFGQEAEVTEVGQVLSVGDGIARVYGLDNVQAGEMVEFENGTRGMALNLETDNVGVVIFGADREIKEGQTVKRTRAIVDAPVGKGLLGRVVDALGNPIDGKGPIQFTERKRVDVKAPGIIPRKSVNEPMATGLKAIDALIPIGRGQRELIIGDRQTGKTAIALDTILNQKPLNAQPDEKIKLYCVYVAVGQKRSTVAQFVKVLEEQGALEYSIVVAATASDPAPMQYLAPFTGCTMGEYFRDNGMHAVIIYDDLSKQAVAYRQMSLLLRRPPGREAYPGDVFYLHSRLLERAAKLNETQGAGSLTALPVIETQANDVSAYIPTNVISITDGQIFLETDLFFQGIRPAVNVGLSVSRVGSSAQTKAMKKVAGKIKGELAQYREMAAFAQFGSDLDAATQRLLNRGSRLTELLKQPQFSPLKMEEQVCVIWAGTNGYLDALPLGKVRAFEDGLLSLLRGKHADLLNTIRDTRDLSDDSAAKLKAAVEGFAKTFS.

169 to 176 (GDRQTGKT) contributes to the ATP binding site.

It belongs to the ATPase alpha/beta chains family. In terms of assembly, F-type ATPases have 2 components, CF(1) - the catalytic core - and CF(0) - the membrane proton channel. CF(1) has five subunits: alpha(3), beta(3), gamma(1), delta(1), epsilon(1). CF(0) has four main subunits: a(1), b(1), b'(1) and c(9-12).

Its subcellular location is the cell inner membrane. The catalysed reaction is ATP + H2O + 4 H(+)(in) = ADP + phosphate + 5 H(+)(out). Its function is as follows. Produces ATP from ADP in the presence of a proton gradient across the membrane. The alpha chain is a regulatory subunit. This Bradyrhizobium sp. (strain BTAi1 / ATCC BAA-1182) protein is ATP synthase subunit alpha.